The chain runs to 23 residues: Apolipophorin-1 (23 aa).

Over residues 1–15 (SVKSEVDNFDKHLKA) the composition is skewed to basic and acidic residues. The disordered stretch occupies residues 1 to 23 (SVKSEVDNFDKHLKAESAPFNNE).

Expressed in hemolymph.

It is found in the secreted. Its function is as follows. Constitutes the major component of lipophorin, which mediates transport for various types of lipids in hemolymph. Acts by forming lipoprotein particles that bind lipoproteins and lipids. This chain is Apolipophorin-1, found in Galleria mellonella (Greater wax moth).